The following is a 215-amino-acid chain: Calcium-binding protein 7 (215 aa).

The Cytoplasmic segment spans residues M1 to S188. 2 EF-hand domains span residues D33–M68 and P69–T104. 9 residues coordinate Ca(2+): D46, D48, N50, E57, D82, D84, D86, Q88, and E93. A helical; Anchor for type IV membrane protein transmembrane segment spans residues L189–V209. The Extracellular portion of the chain corresponds to L210 to K215.

In terms of assembly, interacts with PI4KB. This binding competes with FREQ/NCS1 binding in a calcium-dependent manner.

The protein resides in the golgi apparatus. It localises to the trans-Golgi network membrane. The protein localises to the cytoplasm. It is found in the perinuclear region. Its subcellular location is the cell membrane. Negatively regulates Golgi-to-plasma membrane trafficking by interacting with PI4KB and inhibiting its activity. The chain is Calcium-binding protein 7 (CABP7) from Homo sapiens (Human).